The primary structure comprises 327 residues: Zinc transport protein ZntB (327 aa).

The Cytoplasmic portion of the chain corresponds to 1–271 (METIYGSSLK…AMNRRTYTMS (271 aa)). The helical transmembrane segment at 272–292 (LLAMIFLPTTFLTGLFGVNLG) threads the bilayer. The Periplasmic portion of the chain corresponds to 293–300 (GIPGNEYY). Residues 301–321 (LGFAIFCLLLFGLVLFVAWWL) traverse the membrane as a helical segment. Residues 322 to 327 (KKSKWL) lie on the Cytoplasmic side of the membrane.

This sequence belongs to the CorA metal ion transporter (MIT) (TC 1.A.35) family.

It localises to the cell inner membrane. The catalysed reaction is Zn(2+)(out) + H(+)(out) = Zn(2+)(in) + H(+)(in). Zinc transporter. Acts as a Zn(2+):proton symporter, which likely mediates zinc ion uptake. In Photorhabdus laumondii subsp. laumondii (strain DSM 15139 / CIP 105565 / TT01) (Photorhabdus luminescens subsp. laumondii), this protein is Zinc transport protein ZntB.